The chain runs to 877 residues: Alanine--tRNA ligase (877 aa).

Residues His566, His570, Cys668, and His672 each contribute to the Zn(2+) site.

Belongs to the class-II aminoacyl-tRNA synthetase family. Zn(2+) serves as cofactor.

The protein resides in the cytoplasm. The enzyme catalyses tRNA(Ala) + L-alanine + ATP = L-alanyl-tRNA(Ala) + AMP + diphosphate. In terms of biological role, catalyzes the attachment of alanine to tRNA(Ala) in a two-step reaction: alanine is first activated by ATP to form Ala-AMP and then transferred to the acceptor end of tRNA(Ala). Also edits incorrectly charged Ser-tRNA(Ala) and Gly-tRNA(Ala) via its editing domain. The protein is Alanine--tRNA ligase of Staphylococcus aureus (strain USA300 / TCH1516).